Here is a 97-residue protein sequence, read N- to C-terminus: Putative membrane protein insertion efficiency factor (97 aa).

Positions 68–97 are disordered; it reads VPGTELNTAPRSGQACNPTESTHSTTQTRH. Positions 72–97 are enriched in polar residues; it reads ELNTAPRSGQACNPTESTHSTTQTRH.

This sequence belongs to the UPF0161 family.

It localises to the cell inner membrane. In terms of biological role, could be involved in insertion of integral membrane proteins into the membrane. The chain is Putative membrane protein insertion efficiency factor from Marinobacter nauticus (strain ATCC 700491 / DSM 11845 / VT8) (Marinobacter aquaeolei).